A 133-amino-acid chain; its full sequence is MSAATDEILEKLKSLTLLEASELVKQIEEAFGVSAAAPSGGMMMMAPGAAAPGAAAAEPEEEKTEFDVILEEVPGDKKIAILKVVRGITGLGLKEAKDMVESTPKPIKEGTGKEDAEDIKKKLEEAGAKVSVK.

A disordered region spans residues 98–118 (DMVESTPKPIKEGTGKEDAED).

Belongs to the bacterial ribosomal protein bL12 family. As to quaternary structure, homodimer. Part of the ribosomal stalk of the 50S ribosomal subunit. Forms a multimeric L10(L12)X complex, where L10 forms an elongated spine to which 2 to 4 L12 dimers bind in a sequential fashion. Binds GTP-bound translation factors.

Forms part of the ribosomal stalk which helps the ribosome interact with GTP-bound translation factors. Is thus essential for accurate translation. The chain is Large ribosomal subunit protein bL12 from Crocosphaera subtropica (strain ATCC 51142 / BH68) (Cyanothece sp. (strain ATCC 51142)).